Reading from the N-terminus, the 163-residue chain is Transcription elongation factor GreB (163 aa).

This sequence belongs to the GreA/GreB family. GreB subfamily.

Its function is as follows. Necessary for efficient RNA polymerase transcription elongation past template-encoded arresting sites. The arresting sites in DNA have the property of trapping a certain fraction of elongating RNA polymerases that pass through, resulting in locked ternary complexes. Cleavage of the nascent transcript by cleavage factors such as GreA or GreB allows the resumption of elongation from the new 3'terminus. GreB releases sequences of up to 9 nucleotides in length. The chain is Transcription elongation factor GreB from Vibrio parahaemolyticus serotype O3:K6 (strain RIMD 2210633).